The chain runs to 128 residues: Large ribosomal subunit protein bL19 (128 aa).

This sequence belongs to the bacterial ribosomal protein bL19 family.

This protein is located at the 30S-50S ribosomal subunit interface and may play a role in the structure and function of the aminoacyl-tRNA binding site. The protein is Large ribosomal subunit protein bL19 of Ralstonia nicotianae (strain ATCC BAA-1114 / GMI1000) (Ralstonia solanacearum).